The following is a 1268-amino-acid chain: SR-related and CTD-associated factor 8 (1268 aa).

The CID domain occupies 1 to 139; it reads MEAVKTFNSE…PLLDMAAGIP (139 aa). Phosphothreonine is present on Thr6. A Glycyl lysine isopeptide (Lys-Gly) (interchain with G-Cter in SUMO1) cross-link involves residue Lys18. The residue at position 273 (Ser273) is a Phosphoserine. 2 disordered regions span residues 322–355 and 385–469; these read QQQP…QQHF and EIFE…PVRS. Residues 342–354 are compositionally biased toward polar residues; sequence HSASPSQGSSQQH. The segment covering 394–443 has biased composition (basic residues); the sequence is VAVRSRSRTHSRSRSRSPRKRRSRSRSGSRKRKHRKRSRSRSRERKRKSS. Basic and acidic residues predominate over residues 447–461; that stretch reads SSERRAREREKERQK. Positions 477–551 constitute an RRM domain; the sequence is TTLWVGQVDK…KVIKIAWALN (75 aa). The residue at position 615 (Thr615) is a Phosphothreonine. Ser617 carries the post-translational modification Phosphoserine. The tract at residues 753–808 is disordered; the sequence is AGNVFNPPSKAEPEEKVPHLTEHQIPSGENTRPVIPSDIPSSAPMLAQPPGASNTS. Residues 763 to 774 show a composition bias toward basic and acidic residues; the sequence is AEPEEKVPHLTE. Asymmetric dimethylarginine occurs at positions 915, 925, and 936. The tract at residues 947-1063 is disordered; sequence QRGIPPPSVL…GRDHFGRPPV (117 aa). Positions 961 to 970 are enriched in pro residues; sequence HPPPRGPFPP. 2 stretches are compositionally biased toward basic and acidic residues: residues 1009–1025 and 1032–1063; these read EGDR…REGI and DVRD…RPPV. Position 1071 is an asymmetric dimethylarginine (Arg1071). Positions 1199–1268 are disordered; that stretch reads ATSQRKGENV…VVESTETEGT (70 aa). Over residues 1249 to 1262 the composition is skewed to low complexity; it reads GTAAGVESEAVVES.

Interacts with POLR2A; via C-terminal heptapeptide repeat domain (CTD) phosphorylated at 'Ser-2' and 'Ser-5'. Identified in a complex with CDC5L and other spliceosomal proteins.

The protein resides in the nucleus. The protein localises to the nucleus matrix. Its function is as follows. Anti-terminator protein required to prevent early mRNA termination during transcription. Together with SCAF4, acts by suppressing the use of early, alternative poly(A) sites, thereby preventing the accumulation of non-functional truncated proteins. Mechanistically, associates with the phosphorylated C-terminal heptapeptide repeat domain (CTD) of the largest RNA polymerase II subunit (POLR2A), and subsequently binds nascent RNA upstream of early polyadenylation sites to prevent premature mRNA transcript cleavage and polyadenylation. Independently of SCAF4, also acts as a positive regulator of transcript elongation. The sequence is that of SR-related and CTD-associated factor 8 from Rattus norvegicus (Rat).